A 201-amino-acid chain; its full sequence is Casparian strip membrane protein 7 (201 aa).

The segment covering 1–11 (MEAGEEIEDGE) has biased composition (acidic residues). Residues 1–26 (MEAGEEIEDGEPSTPTYKAHHPPPHL) form a disordered region. Over 1–34 (MEAGEEIEDGEPSTPTYKAHHPPPHLPPPMRSSG) the chain is Cytoplasmic. A helical transmembrane segment spans residues 35–55 (VSLVLSVADLVLRFVAIGGTA). The Extracellular segment spans residues 56-86 (GSAIAMATTSETLPFAAPFVRFRAEYSDLPT). Residues 87–107 (LMFFVVASSVVCAYLVLSLPA) form a helical membrane-spanning segment. The Cytoplasmic segment spans residues 108-128 (SVVHVVRPGARSSRAILAFLD). The helical transmembrane segment at 129-149 (TVMLALLTASASAAAAIVYLA) threads the bilayer. Residues 150 to 171 (HRGSARANWLGICQQFTSFCQR) lie on the Extracellular side of the membrane. A helical membrane pass occupies residues 172–192 (ITASLVGSFAAAVVLVALVFL). Over 193 to 201 (SALSLARRA) the chain is Cytoplasmic.

The protein belongs to the Casparian strip membrane proteins (CASP) family. As to quaternary structure, homodimer and heterodimers.

The protein resides in the cell membrane. Regulates membrane-cell wall junctions and localized cell wall deposition. Required for establishment of the Casparian strip membrane domain (CSD) and the subsequent formation of Casparian strips, a cell wall modification of the root endodermis that determines an apoplastic barrier between the intraorganismal apoplasm and the extraorganismal apoplasm and prevents lateral diffusion. In Oryza sativa subsp. japonica (Rice), this protein is Casparian strip membrane protein 7.